We begin with the raw amino-acid sequence, 157 residues long: Transcription elongation factor GreA (157 aa).

It belongs to the GreA/GreB family.

Functionally, necessary for efficient RNA polymerase transcription elongation past template-encoded arresting sites. The arresting sites in DNA have the property of trapping a certain fraction of elongating RNA polymerases that pass through, resulting in locked ternary complexes. Cleavage of the nascent transcript by cleavage factors such as GreA or GreB allows the resumption of elongation from the new 3'terminus. GreA releases sequences of 2 to 3 nucleotides. This chain is Transcription elongation factor GreA, found in Caulobacter vibrioides (strain ATCC 19089 / CIP 103742 / CB 15) (Caulobacter crescentus).